The sequence spans 567 residues: MNSTPDLISPQKSSENSNADLPSNSSQVMNMPEEKGVQDDFQAEADQVLTNPNTGKGAYVTVSICCVMVAFGGFVFGWDTGTISGFVAQTDFLRRFGMKHKDGSYYLSKVRTGLIVSIFNIGCAIGGIILAKLGDMYGRKMGLIVVVVIYIIGIIIQIASINKWYQYFIGRIISGLGVGGIAVLSPMLISEVAPKEMRGTLVSCYQLMITLGIFLGYCTNFGTKNYSNSVQWRVPLGLCFAWALFMIGGMTFVPESPRYLVEAGQIDEARASLSKVNKVAPDHPFIQQELEVIEASVEEARAAGSASWGELFTGKPAMFKRTMMGIMIQSLQQLTGDNYFFYYGTTVFNAVGMSDSFETSIVFGVVNFFSTCCSLYTVDRFGRRNCLLYGAIGMVCCYVVYASVGVTRLWPNGEGNGSSKGAGNCMIVFACFYIFCFATTWAPIAYVVISETFPLRVKSKAMSIATAANWLWGFLIGFFTPFITGAINFYYGYVFMGCMVFAYFYVFFFVPETKGLTLEEVNDMYAEGVLPWKSASWVPTSQRGANYDADALMHDDQPFYKKMFGKK.

Over residues Met1–Met29 the composition is skewed to polar residues. The interval Met1–Asn30 is disordered. The Cytoplasmic segment spans residues Met1–Gly57. The residue at position 23 (Ser23) is a Phosphoserine. Residues Ala58–Trp78 form a helical membrane-spanning segment. The Extracellular portion of the chain corresponds to Asp79–Gly113. The helical transmembrane segment at Leu114–Gly134 threads the bilayer. The Cytoplasmic portion of the chain corresponds to Asp135 to Lys140. Residues Met141–Ile161 form a helical membrane-spanning segment. Over Asn162–Arg171 the chain is Extracellular. The helical transmembrane segment at Ile172 to Val192 threads the bilayer. The Cytoplasmic portion of the chain corresponds to Ala193 to Arg198. A helical membrane pass occupies residues Gly199–Thr219. Residues Asn220–Arg233 lie on the Extracellular side of the membrane. The N-linked (GlcNAc...) asparagine glycan is linked to Asn225. A helical transmembrane segment spans residues Val234–Pro254. Over Glu255–Asp337 the chain is Cytoplasmic. Residues Asn338–Ser354 traverse the membrane as a helical segment. The Extracellular portion of the chain corresponds to Asp355–Ser360. A helical transmembrane segment spans residues Ile361–Val378. Residues Asp379–Asn385 are Cytoplasmic-facing. Residues Cys386–Val406 form a helical membrane-spanning segment. The Extracellular segment spans residues Thr407 to Val428. Asn416 carries N-linked (GlcNAc...) asparagine glycosylation. Residues Phe429 to Ile449 form a helical membrane-spanning segment. Topologically, residues Ser450–Thr466 are cytoplasmic. The helical transmembrane segment at Ala467 to Ile487 threads the bilayer. Position 488 (Asn488) is a topological domain, extracellular. A helical membrane pass occupies residues Phe489–Phe509. The Cytoplasmic portion of the chain corresponds to Val510–Lys567.

It belongs to the major facilitator superfamily. Sugar transporter (TC 2.A.1.1) family.

It localises to the membrane. Low-affinity glucose transporter. The polypeptide is Low-affinity glucose transporter HXT3 (HXT3) (Saccharomyces cerevisiae (strain ATCC 204508 / S288c) (Baker's yeast)).